The chain runs to 109 residues: Flowering-promoting factor 1-like protein 1 (109 aa).

Positions 73 to 81 (RGSLDLISL) match the D-box motif.

This sequence belongs to the FPF1 family. Interacts with RPT4. Post-translationally, ubiquitinated. RPT4 mediates its proteasome-dependent degradation. In terms of tissue distribution, specifically expressed in the apical meristem, the elongation zone of root tip, steles of the branch zone, and the young lateral root. Also expressed in spikes. Expressed in roots and spikes (at protein level).

It is found in the cytoplasm. The protein localises to the nucleus. Functionally, GTP-binding protein that functions in the development of root systems, which are mediated by auxin. Acts as a cell cycle regulator during root development. Proteasome-mediated degradation of the protein is necessary for the transition of metaphase to anaphase in mitosis. The sequence is that of Flowering-promoting factor 1-like protein 1 (RAA1) from Oryza sativa subsp. japonica (Rice).